Consider the following 355-residue polypeptide: MSTKESKPNLSHSQVTDVVKRLYGLTASVVRPLPSYDDQNFYVAPSEGGEFVLKVMNSADSENVAVIELQTQSMNFLHQRGLPAQTALPTLTGQLMSLEEFDCGFGTQIYLVRLLTYLPGTTIAKITCSPQILYDVGKMAATLDTVLLQMEHPNTRVLQRERFIWKLTSIPLLNQYVHVMDGDPVQKIVKGVIEKYQVQVMPKLPLFRECINHGDFNDHNLLVKPDGPSKYKISGILDFADMSCGYFIFELAITIMYMMIESPTPLDVGGPVVAGWESVFPLNEAERDSLYWLVMCRFCQSLVLARYTVIQQPENEEYLMITSRKGLRHLSRLWELGKDEVERRWFQSAQQFRQI.

Catalysis depends on aspartate 215, which acts as the Proton acceptor.

Belongs to the aminoglycoside phosphotransferase family.

The protein resides in the cytoplasm. It catalyses the reaction (5R)-5-hydroxy-L-lysine + GTP = (5R)-5-phosphooxy-L-lysine + GDP + H(+). Catalyzes the GTP-dependent phosphorylation of 5-hydroxy-L-lysine. In Danio rerio (Zebrafish), this protein is Hydroxylysine kinase (hykk).